We begin with the raw amino-acid sequence, 512 residues long: AMP phosphorylase (512 aa).

AMP contacts are provided by residues Gly-166, 192 to 197 (SRAITG), and Thr-201. Asp-254 (proton donor) is an active-site residue. Positions 262 and 286 each coordinate AMP.

Belongs to the thymidine/pyrimidine-nucleoside phosphorylase family. Type 2 subfamily.

The catalysed reaction is AMP + phosphate = alpha-D-ribose 1,5-bisphosphate + adenine. It catalyses the reaction CMP + phosphate = cytosine + alpha-D-ribose 1,5-bisphosphate. The enzyme catalyses UMP + phosphate = alpha-D-ribose 1,5-bisphosphate + uracil. Catalyzes the conversion of AMP and phosphate to adenine and ribose 1,5-bisphosphate (R15P). Exhibits phosphorylase activity toward CMP and UMP in addition to AMP. Functions in an archaeal AMP degradation pathway, together with R15P isomerase and RubisCO. The chain is AMP phosphorylase from Methanothrix thermoacetophila (strain DSM 6194 / JCM 14653 / NBRC 101360 / PT) (Methanosaeta thermophila).